The sequence spans 545 residues: Degenerin-like protein asic-2 (545 aa).

Residues 1-34 (MRGGGFVQIFKDFSNWSTVAVVPHVANANNKISR) are Cytoplasmic-facing. Residues 35 to 55 (IFWIAIFLFVLGMFAYELYIL) traverse the membrane as a helical segment. The Extracellular segment spans residues 56 to 457 (IAKFFSYPAT…NVINDLGGQA (402 aa)). An intrachain disulfide couples Cys-83 to Cys-191. Residue Asn-201 is glycosylated (N-linked (GlcNAc...) asparagine). 5 disulfides stabilise this stretch: Cys-284–Cys-370, Cys-305–Cys-366, Cys-309–Cys-364, Cys-318–Cys-343, and Cys-320–Cys-334. N-linked (GlcNAc...) asparagine glycosylation is present at Asn-350. Residues 458–478 (GLWLGLSVISVVEMTGLMLVM) form a helical membrane-spanning segment. Residues 462-464 (GLS) carry the GAS motif; ion selectivity filter motif. Topologically, residues 479–545 (GAFCVTGGAI…NKGDEEKKKK (67 aa)) are cytoplasmic. Basic and acidic residues-rich tracts occupy residues 514–523 (DHLEKKHGEM) and 534–545 (IENKGDEEKKKK). Residues 514–545 (DHLEKKHGEMESGSDGEVDDIENKGDEEKKKK) are disordered.

Belongs to the amiloride-sensitive sodium channel (TC 1.A.6) family. As to quaternary structure, can form homotrimers. Heterotrimer; forms functional heterotrimers producing channel with different properties.

It is found in the cell membrane. The enzyme catalyses Na(+)(in) = Na(+)(out). With respect to regulation, inhibited by the diuretic drug amiloride. Functionally, could form pH-gated heterotrimeric sodium channels that act as postsynaptic excitatory sensors in the nervous system, generating rapid, transient inward currents that fully desensitize upon extracellular acidification. The protein is Degenerin-like protein asic-2 (asic-2) of Caenorhabditis elegans.